The sequence spans 361 residues: Chorismate synthase (361 aa).

Arginine 48 contacts NADP(+). FMN-binding positions include 125 to 127 (RSS), 238 to 239 (NA), glycine 278, 293 to 297 (KPTSS), and arginine 319.

Belongs to the chorismate synthase family. As to quaternary structure, homotetramer. Requires FMNH2 as cofactor.

The enzyme catalyses 5-O-(1-carboxyvinyl)-3-phosphoshikimate = chorismate + phosphate. It functions in the pathway metabolic intermediate biosynthesis; chorismate biosynthesis; chorismate from D-erythrose 4-phosphate and phosphoenolpyruvate: step 7/7. In terms of biological role, catalyzes the anti-1,4-elimination of the C-3 phosphate and the C-6 proR hydrogen from 5-enolpyruvylshikimate-3-phosphate (EPSP) to yield chorismate, which is the branch point compound that serves as the starting substrate for the three terminal pathways of aromatic amino acid biosynthesis. This reaction introduces a second double bond into the aromatic ring system. This is Chorismate synthase from Aliivibrio fischeri (strain ATCC 700601 / ES114) (Vibrio fischeri).